The sequence spans 121 residues: ATP synthase epsilon chain (121 aa).

The protein belongs to the ATPase epsilon chain family. F-type ATPases have 2 components, CF(1) - the catalytic core - and CF(0) - the membrane proton channel. CF(1) has five subunits: alpha(3), beta(3), gamma(1), delta(1), epsilon(1). CF(0) has three main subunits: a, b and c.

The protein localises to the cell membrane. Functionally, produces ATP from ADP in the presence of a proton gradient across the membrane. The sequence is that of ATP synthase epsilon chain from Mycolicibacterium vanbaalenii (strain DSM 7251 / JCM 13017 / BCRC 16820 / KCTC 9966 / NRRL B-24157 / PYR-1) (Mycobacterium vanbaalenii).